The primary structure comprises 263 residues: TLC domain-containing protein 4 (263 aa).

The next 4 helical transmembrane spans lie at 7–27 (LLISVTCISFFTFQLLFYFVS), 53–73 (VVSTCHSLVVGIFGLYIFLFD), 90–110 (VNIAIASGYLISDLSIIILYW), and 124–144 (ASLYAYYLVLKNGVLAYIGNF). The TLC domain maps to 44 to 246 (KKKIEWNSRV…ISKGCIKVIS (203 aa)). Lysine 165 carries the N6-acetyllysine modification. 2 helical membrane-spanning segments follow: residues 173–193 (IVINGILMTVVFFIVRIASML) and 211–231 (LGVLIQLSWVISCVVLDVMNV).

The protein belongs to the TLCD4 family.

The protein resides in the membrane. This is TLC domain-containing protein 4 from Homo sapiens (Human).